We begin with the raw amino-acid sequence, 444 residues long: Forkhead box protein F2 (444 aa).

The tract at residues 32 to 98 (PAAAAAAAAA…KKASSGLRRP (67 aa)) is disordered. A compositionally biased stretch (low complexity) spans 34–75 (AAAAAAAAPETTSSSSSSSSASCASSSSSSNSASAPSAACKS). A compositionally biased stretch (gly residues) spans 76–87 (AGGGGAGAGSGG). The fork-head DNA-binding region spans 99-190 (EKPPYSYIAL…EFMFEEGSFR (92 aa)). Disordered stretches follow at residues 256–323 (GAGA…SPAM) and 338–367 (AHWSSPGASPYLKQPPALTPSSNPAASAGL). Residues 263 to 274 (AHPHHHHHHHVP) show a composition bias toward basic residues. Positions 293-308 (GPGGVGAAGGGGGGDY) are enriched in gly residues. The span at 309–323 (GPDSSSSPVPSSPAM) shows a compositional bias: low complexity.

Interacts with the transcription factors TBP and TFIIB. Lung and placenta. Predominantly expressed in gastrointestinal tract including stomach.

It is found in the nucleus. Probable transcription activator for a number of lung-specific genes. Mediates up-regulation of the E3 ligase IRF2BPL and drives ubiquitination and degradation of CTNNB1. In Homo sapiens (Human), this protein is Forkhead box protein F2 (FOXF2).